The primary structure comprises 276 residues: Diaminopimelate epimerase (276 aa).

Substrate is bound by residues asparagine 13, glutamine 46, and asparagine 66. The Proton donor role is filled by cysteine 75. Substrate-binding positions include 76–77, asparagine 159, asparagine 192, and 210–211; these read GN and ER. Residue cysteine 219 is the Proton acceptor of the active site. A substrate-binding site is contributed by 220-221; that stretch reads GT.

This sequence belongs to the diaminopimelate epimerase family. As to quaternary structure, homodimer.

The protein resides in the cytoplasm. It catalyses the reaction (2S,6S)-2,6-diaminopimelate = meso-2,6-diaminopimelate. It functions in the pathway amino-acid biosynthesis; L-lysine biosynthesis via DAP pathway; DL-2,6-diaminopimelate from LL-2,6-diaminopimelate: step 1/1. Its function is as follows. Catalyzes the stereoinversion of LL-2,6-diaminopimelate (L,L-DAP) to meso-diaminopimelate (meso-DAP), a precursor of L-lysine and an essential component of the bacterial peptidoglycan. In Stutzerimonas stutzeri (strain A1501) (Pseudomonas stutzeri), this protein is Diaminopimelate epimerase.